The chain runs to 367 residues: Queuine tRNA-ribosyltransferase (367 aa).

Catalysis depends on D92, which acts as the Proton acceptor. Substrate contacts are provided by residues 92–96 (DSGGF), D146, Q188, and G215. The tract at residues 246–252 (GVGTPKD) is RNA binding. D265 (nucleophile) is an active-site residue. Zn(2+) is bound by residues C303, C305, C308, and H334.

The protein belongs to the queuine tRNA-ribosyltransferase family. In terms of assembly, homodimer. Within each dimer, one monomer is responsible for RNA recognition and catalysis, while the other monomer binds to the replacement base PreQ1. Requires Zn(2+) as cofactor.

The enzyme catalyses 7-aminomethyl-7-carbaguanine + guanosine(34) in tRNA = 7-aminomethyl-7-carbaguanosine(34) in tRNA + guanine. It participates in tRNA modification; tRNA-queuosine biosynthesis. Catalyzes the base-exchange of a guanine (G) residue with the queuine precursor 7-aminomethyl-7-deazaguanine (PreQ1) at position 34 (anticodon wobble position) in tRNAs with GU(N) anticodons (tRNA-Asp, -Asn, -His and -Tyr). Catalysis occurs through a double-displacement mechanism. The nucleophile active site attacks the C1' of nucleotide 34 to detach the guanine base from the RNA, forming a covalent enzyme-RNA intermediate. The proton acceptor active site deprotonates the incoming PreQ1, allowing a nucleophilic attack on the C1' of the ribose to form the product. After dissociation, two additional enzymatic reactions on the tRNA convert PreQ1 to queuine (Q), resulting in the hypermodified nucleoside queuosine (7-(((4,5-cis-dihydroxy-2-cyclopenten-1-yl)amino)methyl)-7-deazaguanosine). In Francisella tularensis subsp. tularensis (strain FSC 198), this protein is Queuine tRNA-ribosyltransferase.